Consider the following 157-residue polypeptide: uncharacterized protein (157 aa).

This is an uncharacterized protein from Saccharomyces cerevisiae (strain ATCC 204508 / S288c) (Baker's yeast).